A 124-amino-acid polypeptide reads, in one-letter code: Small ribosomal subunit protein uS12 (124 aa).

A 3-methylthioaspartic acid modification is found at Asp89. Positions 104–124 (TAGVKDRRQSRSKYGAKTPKE) are disordered.

It belongs to the universal ribosomal protein uS12 family. Part of the 30S ribosomal subunit. Contacts proteins S8 and S17. May interact with IF1 in the 30S initiation complex.

With S4 and S5 plays an important role in translational accuracy. Its function is as follows. Interacts with and stabilizes bases of the 16S rRNA that are involved in tRNA selection in the A site and with the mRNA backbone. Located at the interface of the 30S and 50S subunits, it traverses the body of the 30S subunit contacting proteins on the other side and probably holding the rRNA structure together. The combined cluster of proteins S8, S12 and S17 appears to hold together the shoulder and platform of the 30S subunit. The chain is Small ribosomal subunit protein uS12 from Parasynechococcus marenigrum (strain WH8102).